Here is a 321-residue protein sequence, read N- to C-terminus: Pheromone-regulated membrane protein 5 (321 aa).

The disordered stretch occupies residues Ser-35–Thr-59. A helical membrane pass occupies residues Phe-81–Ile-101. Residue Ser-132 is modified to Phosphoserine. The span at Thr-241–Leu-250 shows a compositional bias: low complexity. The interval Thr-241 to Glu-321 is disordered. Residues Gly-253–Lys-264 are compositionally biased toward basic and acidic residues. Over residues Ser-279 to Arg-288 the composition is skewed to polar residues. Residues Ser-282, Ser-285, and Ser-291 each carry the phosphoserine modification. Over residues His-312 to Glu-321 the composition is skewed to basic and acidic residues. Residue Lys-317 forms a Glycyl lysine isopeptide (Lys-Gly) (interchain with G-Cter in ubiquitin) linkage.

The protein belongs to the PRM5 family.

Its subcellular location is the membrane. The chain is Pheromone-regulated membrane protein 5 (PRM5) from Saccharomyces cerevisiae (strain YJM789) (Baker's yeast).